Consider the following 316-residue polypeptide: Transaldolase (316 aa).

The Schiff-base intermediate with substrate role is filled by Lys-132.

The protein belongs to the transaldolase family. Type 1 subfamily. In terms of assembly, homodimer.

It localises to the cytoplasm. It catalyses the reaction D-sedoheptulose 7-phosphate + D-glyceraldehyde 3-phosphate = D-erythrose 4-phosphate + beta-D-fructose 6-phosphate. Its pathway is carbohydrate degradation; pentose phosphate pathway; D-glyceraldehyde 3-phosphate and beta-D-fructose 6-phosphate from D-ribose 5-phosphate and D-xylulose 5-phosphate (non-oxidative stage): step 2/3. Its function is as follows. Transaldolase is important for the balance of metabolites in the pentose-phosphate pathway. The chain is Transaldolase from Vibrio parahaemolyticus serotype O3:K6 (strain RIMD 2210633).